Consider the following 590-residue polypeptide: Membrane protein insertase YidC (590 aa).

The next 5 helical transmembrane spans lie at 5–25 (SVIG…FMKP), 368–388 (GLII…LSLA), 433–453 (LGGC…FYVF), 483–503 (LPLY…TVFF), and 519–539 (IMMW…PAGL).

This sequence belongs to the OXA1/ALB3/YidC family. Type 1 subfamily. In terms of assembly, interacts with the Sec translocase complex via SecD. Specifically interacts with transmembrane segments of nascent integral membrane proteins during membrane integration.

The protein resides in the cell inner membrane. Required for the insertion and/or proper folding and/or complex formation of integral membrane proteins into the membrane. Involved in integration of membrane proteins that insert both dependently and independently of the Sec translocase complex, as well as at least some lipoproteins. Aids folding of multispanning membrane proteins. This chain is Membrane protein insertase YidC, found in Chlorobaculum tepidum (strain ATCC 49652 / DSM 12025 / NBRC 103806 / TLS) (Chlorobium tepidum).